Reading from the N-terminus, the 331-residue chain is Ribose-phosphate pyrophosphokinase (331 aa).

55 to 57 (DGE) contributes to the ATP binding site. Residues His148 and Asp187 each coordinate Mg(2+). Lys211 is a catalytic residue. D-ribose 5-phosphate contacts are provided by residues Arg213, Asp237, and 241 to 245 (DTAGT).

This sequence belongs to the ribose-phosphate pyrophosphokinase family. Class I subfamily. In terms of assembly, homohexamer. Mg(2+) is required as a cofactor.

The protein localises to the cytoplasm. The enzyme catalyses D-ribose 5-phosphate + ATP = 5-phospho-alpha-D-ribose 1-diphosphate + AMP + H(+). The protein operates within metabolic intermediate biosynthesis; 5-phospho-alpha-D-ribose 1-diphosphate biosynthesis; 5-phospho-alpha-D-ribose 1-diphosphate from D-ribose 5-phosphate (route I): step 1/1. In terms of biological role, involved in the biosynthesis of the central metabolite phospho-alpha-D-ribosyl-1-pyrophosphate (PRPP) via the transfer of pyrophosphoryl group from ATP to 1-hydroxyl of ribose-5-phosphate (Rib-5-P). This Synechococcus elongatus (strain ATCC 33912 / PCC 7942 / FACHB-805) (Anacystis nidulans R2) protein is Ribose-phosphate pyrophosphokinase.